A 1500-amino-acid polypeptide reads, in one-letter code: Carbamoyl-phosphate synthase [ammonia], mitochondrial (1500 aa).

The transit peptide at 1-38 (MTRILTACKVVKTLKSGFGLANVTSKRQWDFSRPGIRL) directs the protein to the mitochondrion. The interval 39–218 (LSVKAQTAHI…VKVFGKGNPT (180 aa)) is anthranilate phosphoribosyltransferase homolog. K55, K57, and K119 each carry N6-acetyllysine; alternate. K55 is modified (N6-glutaryllysine; alternate). N6-succinyllysine; alternate occurs at positions 55, 57, and 119. S148 carries the post-translational modification Phosphoserine. N6-acetyllysine; alternate occurs at positions 157 and 171. N6-succinyllysine; alternate is present on K157. The residue at position 171 (K171) is an N6-glutaryllysine; alternate. K176 bears the N6-glutaryllysine mark. Position 182 is an N6-acetyllysine (K182). A Phosphoserine modification is found at S189. Residue K197 is modified to N6-acetyllysine. N6-acetyllysine; alternate is present on residues K207, K210, K214, K219, and K228. An N6-glutaryllysine; alternate mark is found at K207, K210, K214, K219, and K228. K207 is modified (N6-succinyllysine; alternate). K214 carries the N6-succinyllysine; alternate modification. One can recognise a Glutamine amidotransferase type-1 domain in the interval 219 to 404 (KVVAVDCGIK…FSLIKKGKGT (186 aa)). K237 is modified (N6-glutaryllysine). At K279 the chain carries N6-acetyllysine. An N6-acetyllysine; alternate mark is found at K280, K287, K307, and K310. Position 280 is an N6-glutaryllysine; alternate (K280). 2 positions are modified to N6-succinyllysine; alternate: K287 and K307. Residues K307 and K310 each carry the N6-glutaryllysine; alternate modification. Position 400 is an N6-succinyllysine (K400). N6-glutaryllysine; alternate occurs at positions 402, 412, 453, and 458. N6-succinyllysine; alternate is present on residues K402 and K412. Residues K412, K453, K458, K522, K527, and K532 each carry the N6-acetyllysine; alternate modification. N6-succinyllysine; alternate is present on residues K458, K522, and K527. An N6-glutaryllysine; alternate mark is found at K527 and K532. S537 carries the post-translational modification Phosphoserine; alternate. O-linked (GlcNAc) serine; alternate glycosylation is present at S537. Phosphoserine is present on S540. Residues 551-743 (SDKLNEINEK…LAFIAAKIAL (193 aa)) form the ATP-grasp 1 domain. N6-acetyllysine; alternate occurs at positions 553 and 560. Residue K553 is modified to N6-glutaryllysine; alternate. An N6-succinyllysine; alternate mark is found at K553 and K560. Position 569 is a phosphoserine (S569). K575, K603, and K612 each carry N6-acetyllysine; alternate. 3 positions are modified to N6-succinyllysine; alternate: K575, K603, and K612. Position 630 is an N6-acetyllysine (K630). N6-glutaryllysine is present on K728. N6-acetyllysine; alternate occurs at positions 751, 757, 772, 793, 811, 831, 841, and 856. 2 positions are modified to N6-succinyllysine; alternate: K751 and K757. N6-glutaryllysine; alternate is present on residues K757, K772, K793, and K811. The residue at position 793 (K793) is an N6-succinyllysine; alternate. Position 831 is an N6-succinyllysine; alternate (K831). N6-glutaryllysine; alternate is present on residues K841 and K856. Position 869 is an N6-glutaryllysine (K869). An N6-acetyllysine; alternate mark is found at K875, K889, and K892. N6-glutaryllysine; alternate occurs at positions 875, 889, and 892. 3 positions are modified to N6-succinyllysine; alternate: K875, K889, and K892. 2 positions are modified to phosphoserine: S896 and S898. Residues K908, K915, and K919 each carry the N6-acetyllysine; alternate modification. N6-glutaryllysine; alternate is present on residues K908, K915, and K919. K915 and K919 each carry N6-succinyllysine; alternate. K935 is subject to N6-acetyllysine. S1036 carries the phosphoserine modification. K1074 bears the N6-acetyllysine; alternate mark. Position 1074 is an N6-glutaryllysine; alternate (K1074). K1074 carries the N6-succinyllysine; alternate modification. Residues S1079, S1090, and S1093 each carry the phosphoserine modification. An ATP-grasp 2 domain is found at 1093 to 1284 (SAVLDELKVA…FIDVATKVMI (192 aa)). K1100 is modified (N6-acetyllysine; alternate). K1100 carries the post-translational modification N6-succinyllysine; alternate. Residue K1149 is modified to N6-succinyllysine. N6-acetyllysine; alternate is present on residues K1168 and K1183. 2 positions are modified to N6-glutaryllysine; alternate: K1168 and K1183. 2 positions are modified to N6-succinyllysine; alternate: K1168 and K1183. At S1203 the chain carries Phosphoserine. K1222 bears the N6-acetyllysine mark. N6-glutaryllysine is present on K1224. K1232, K1269, and K1291 each carry N6-acetyllysine; alternate. Residues K1232, K1269, and K1291 each carry the N6-succinyllysine; alternate modification. The O-linked (GlcNAc) serine glycan is linked to S1331. Residue T1332 is glycosylated (O-linked (GlcNAc) threonine). Positions 1355–1500 (FKIPQKGILI…YRQYSAGKAA (146 aa)) constitute an MGS-like domain. N6-acetyllysine; alternate is present on K1356. An N6-glutaryllysine; alternate mark is found at K1356 and K1360. N6-succinyllysine; alternate occurs at positions 1356 and 1360. Residues T1391, T1394, and W1410 each coordinate N-acetyl-L-glutamate. Phosphoserine is present on residues S1419 and S1431. The N-acetyl-L-glutamate site is built by N1437 and N1440. K1444 is modified (N6-acetyllysine; alternate). At K1444 the chain carries N6-succinyllysine; alternate. Position 1449 (N1449) interacts with N-acetyl-L-glutamate. N6-acetyllysine; alternate occurs at positions 1471, 1479, and 1486. K1471, K1479, and K1486 each carry N6-succinyllysine; alternate. Residues K1479 and K1486 each carry the N6-glutaryllysine; alternate modification.

In terms of assembly, can form homooligomers (monomers as predominant form and dimers). 50% of the mature protein that was isolated had Leu-39 as its N-terminal residue and 50% had Ser-40 suggesting two adjacent processing sites. However, the possibility of proteolytic removal of Leu-39 during the isolation of the enzyme cannot be excluded. Undergoes proteolytic cleavage in the C-terminal region corresponding to the loss of approximately 12 AA residues from the C-terminus. Post-translationally, succinylated at Lys-287 and Lys-1291. Desuccinylated at Lys-1291 by SIRT5, leading to activation. In terms of processing, glutarylated. Glutarylation levels increase during fasting. Deglutarylated by SIRT5 at Lys-55, Lys-219, Lys-412, Lys-889, Lys-892, Lys-915, Lys-1360 and Lys-1486, leading to activation. In terms of tissue distribution, primarily in the liver and small intestine.

Its subcellular location is the mitochondrion. The protein resides in the nucleus. It localises to the nucleolus. It is found in the cell membrane. It carries out the reaction hydrogencarbonate + NH4(+) + 2 ATP = carbamoyl phosphate + 2 ADP + phosphate + 2 H(+). Requires N-acetyl-L-glutamate (NAG) as an allosteric activator. N-acetyl-L-beta-phenylglutamate (Phe-NAG) can also activate CPSase I, but with an activation constant that is 2-fold higher than that for NAG. Its function is as follows. Involved in the urea cycle of ureotelic animals where the enzyme plays an important role in removing excess ammonia from the cell. The polypeptide is Carbamoyl-phosphate synthase [ammonia], mitochondrial (Cps1) (Rattus norvegicus (Rat)).